The primary structure comprises 1273 residues: Protein sax-3 (1273 aa).

Positions 1 to 23 are cleaved as a signal peptide; the sequence is MFNRKTLLCTILLVLQAVIRSFC. 5 consecutive Ig-like C2-type domains span residues 31–127, 133–222, 227–312, 317–411, and 425–511; these read PVII…GSLK, EDFR…ARLS, PKFE…AHLR, PSFQ…LKVT, and PTIE…ASLT. Disulfide bonds link Cys52–Cys110, Cys154–Cys205, Cys248–Cys296, Cys338–Cys393, and Cys446–Cys495. 3 consecutive Fibronectin type-III domains span residues 533–628, 653–750, and 755–849; these read SPTQ…TSKP, QLIK…TAEA, and PPED…MNQD. The chain crosses the membrane as a helical span at residues 874 to 894; it reads VPVIVIVAILIIFVVIIIAYC. Positions 1033-1273 are disordered; it reads APAMPTNPVP…NNGIVTQEQT (241 aa). Residues 1037–1046 show a composition bias toward pro residues; that stretch reads PTNPVPPEPP. A compositionally biased stretch (polar residues) spans 1096–1105; that stretch reads QLHSSDGTGS. A compositionally biased stretch (basic and acidic residues) spans 1106 to 1115; that stretch reads SKERTGERRT. Pro residues predominate over residues 1125–1136; the sequence is IPPPPSNPPPPG. Over residues 1145 to 1156 the composition is skewed to polar residues; the sequence is QTATRRQLNRGS. Residues 1207-1222 are compositionally biased toward acidic residues; that stretch reads MDDDGGSSEADGENSE. A compositionally biased stretch (polar residues) spans 1240 to 1273; it reads SASTLAHSCYGTNGTAQRFRSIPRNNGIVTQEQT.

This sequence belongs to the immunoglobulin superfamily. ROBO/SAX3 family. Expressed in the AVG interneuron and the male-specific sensory neuron HOA.

Its subcellular location is the membrane. Its function is as follows. Required to confine migrating sex myoblasts to the ventral muscle quadrants during their migration through the body and for multiple aspects of sensory, motor, and interneuron axon guidance. The chain is Protein sax-3 from Caenorhabditis elegans.